The primary structure comprises 29 residues: Cyclotide psyleio C (29 aa).

Residues 1-29 (GDLPVCGETCFGGTCNTPGCVCAWPVCTR) constitute a cross-link (cyclopeptide (Gly-Arg)). Intrachain disulfides connect C6/C20, C10/C22, and C15/C27.

This is a cyclic peptide.

Probably participates in a plant defense mechanism. This Psychotria leiocarpa protein is Cyclotide psyleio C.